Consider the following 137-residue polypeptide: Large ribosomal subunit protein uL16 (137 aa).

The protein belongs to the universal ribosomal protein uL16 family. In terms of assembly, part of the 50S ribosomal subunit.

Binds 23S rRNA and is also seen to make contacts with the A and possibly P site tRNAs. The polypeptide is Large ribosomal subunit protein uL16 (Streptococcus pneumoniae serotype 2 (strain D39 / NCTC 7466)).